Here is a 1638-residue protein sequence, read N- to C-terminus: Ciliary rootlet coiled-coil protein 2 (1638 aa).

Polar residues predominate over residues 1–20; it reads MSSTSSNPDDGDTTEQSQLG. Disordered regions lie at residues 1–21, 39–92, 396–423, and 1168–1213; these read MSST…QLGL, REDR…REES, ARLR…TSLH, and TRRK…NLQE. Over residues 67–82 the composition is skewed to low complexity; it reads SSSLGEEPLSGLREPP. Positions 85 to 144 form a coiled coil; the sequence is TSHAREESELLQEELTRLEDLLAQADAEREELASRCHMVSQRLQARLDTTEARLRKSELE. The segment covering 406-421 has biased composition (polar residues); that stretch reads SPHQRMSPARTSSPTS. Coiled-coil stretches lie at residues 426–1234 and 1281–1315; these read LQAV…VQKE and LQEA…AEGA. Residues 1180–1193 show a composition bias toward basic and acidic residues; sequence RTLEAENQRKRQEV. 2 disordered regions span residues 1338–1383 and 1506–1551; these read RNLL…VPVD and ALEE…QTTS. Residues 1349 to 1371 are compositionally biased toward polar residues; the sequence is SPTTGSSQTRPGRQRTSPPTRSY. Coiled-coil stretches lie at residues 1412 to 1506 and 1542 to 1576; these read RDNS…LRQA and RRAL…TEQE.

Belongs to the rootletin family.

This is Ciliary rootlet coiled-coil protein 2 from Mus musculus (Mouse).